Reading from the N-terminus, the 317-residue chain is L-lactate dehydrogenase (317 aa).

NAD(+) contacts are provided by residues Val17, Asp38, Lys43, Tyr69, and 83–84 (GA). Substrate-binding residues include Gln86 and Arg92. Residues Ser105, 122-124 (ATN), and Ser147 each bind NAD(+). Substrate is bound at residue 124–127 (NPVD). 152-155 (DTAR) provides a ligand contact to substrate. Beta-D-fructose 1,6-bisphosphate-binding residues include Arg157 and His172. Residue His179 is the Proton acceptor of the active site. Tyr224 bears the Phosphotyrosine mark. Thr233 lines the substrate pocket.

It belongs to the LDH/MDH superfamily. LDH family. In terms of assembly, homotetramer.

It localises to the cytoplasm. It catalyses the reaction (S)-lactate + NAD(+) = pyruvate + NADH + H(+). It participates in fermentation; pyruvate fermentation to lactate; (S)-lactate from pyruvate: step 1/1. Allosterically activated by fructose 1,6-bisphosphate (FBP). In terms of biological role, catalyzes the conversion of lactate to pyruvate. This is L-lactate dehydrogenase from Geobacillus kaustophilus (strain HTA426).